The sequence spans 295 residues: Signal-transducing adaptor protein 1 (295 aa).

The PH domain maps to 25 to 121 (PLYFEGFLLI…WRGFILTVTE (97 aa)). At Y168 the chain carries Phosphotyrosine. One can recognise an SH2 domain in the interval 177-280 (ACFYTVSRKE…TDENTGQEPS (104 aa)). Positions 270–295 (STDENTGQEPSMEGRSEKLKKNPHIA) are disordered.

As to quaternary structure, interacts with KIT and CSF1R. Interacts with URI1; the interaction is phosphorylation-dependent and occurs in a growth-dependent manner. Post-translationally, phosphorylated on tyrosine by TEC. Phosphorylated on tyrosine by KIT.

Its subcellular location is the nucleus. It localises to the cytoplasm. It is found in the mitochondrion. In terms of biological role, in BCR signaling, appears to function as a docking protein acting downstream of TEC and participates in a positive feedback loop by increasing the activity of TEC. In Homo sapiens (Human), this protein is Signal-transducing adaptor protein 1 (STAP1).